Consider the following 62-residue polypeptide: Protein DsrB (62 aa).

This sequence belongs to the DsrB family.

In Escherichia fergusonii (strain ATCC 35469 / DSM 13698 / CCUG 18766 / IAM 14443 / JCM 21226 / LMG 7866 / NBRC 102419 / NCTC 12128 / CDC 0568-73), this protein is Protein DsrB.